The sequence spans 909 residues: Nitrate reductase [NADH] (909 aa).

Residue cysteine 187 participates in Mo-molybdopterin binding. One can recognise a Cytochrome b5 heme-binding domain in the interval 535 to 610; the sequence is SKMYSMSEVK…LEDFRIGELI (76 aa). Heme-binding residues include histidine 570 and histidine 593. The region spanning 652 to 764 is the FAD-binding FR-type domain; the sequence is REKIPCKLVD…KGPLGHIEYQ (113 aa). Residues 704–707, 721–725, phenylalanine 726, phenylalanine 733, 738–740, and threonine 791 each bind FAD; these read RAYT, VVKIY, and QMS.

This sequence belongs to the nitrate reductase family. Homodimer. Requires FAD as cofactor. The cofactor is heme. Mo-molybdopterin serves as cofactor.

It catalyses the reaction nitrite + NAD(+) + H2O = nitrate + NADH + H(+). Regulated by the nitrogen source and controlled by the circadian rhythm. Its function is as follows. Nitrate reductase is a key enzyme involved in the first step of nitrate assimilation in plants, fungi and bacteria. This Petunia hybrida (Petunia) protein is Nitrate reductase [NADH] (NIA).